The sequence spans 514 residues: Putative ankyrin repeat protein R863 (514 aa).

15 ANK repeats span residues 45-74 (AKIDVIEYIVRNNLTDILKYIVVLKTLKHP), 84-114 (KSLNKLLIDNCEKRRLDIIQYLINIGADINS), 115-144 (KKNRAVRLASERGYLEIVKYLVSQGADVRA), 146-174 (KDYAVVWASRNGHLEVVKYLVSLGANIKV), 176-204 (DNFAVRWASRNGYIDVVKYLTSQDANIRA), 205-234 (DNNYAVRLASENGHIDVVKYLVSLGADIRA), 236-264 (NNYAIRHASRGGHIEVVEYLVSLGANVKS), 266-294 (NDCAVKFASKNGHLGVVKYLASQGADVRS), 295-324 (ENDYAFRMASENGHLEVVVYLVRQGVNVRA), 325-354 (DNNYAVRMASENGYLEIVKFLVSQGANIRS), 356-384 (NDYAIQKASKNGHLEVVEHLVNQGANFKS), 385-414 (DYDCAIKLASENGHLEVVKYLVSQDADIRV), 415-444 (NNDYAIRWASRNGHIEVVKYLVSQGADIRA), 446-474 (NDYAVRMASENGHLEVVKYLVNLGANVKA), and 476-504 (NNYAVGWASRNGHIGVVKYLVSQGADVRS).

The polypeptide is Putative ankyrin repeat protein R863 (Acanthamoeba polyphaga mimivirus (APMV)).